Here is a 969-residue protein sequence, read N- to C-terminus: Leucine--tRNA ligase (969 aa).

Residues 1–23 (MTESPTTSPATGSGAAAPDSDAP) form a disordered region. A 'HIGH' region motif is present at residues 78-89 (PYPSGEGLHVGH). The 'KMSKS' region signature appears at 737–741 (KIGKS). Lys-740 is a binding site for ATP.

The protein belongs to the class-I aminoacyl-tRNA synthetase family.

The protein localises to the cytoplasm. It carries out the reaction tRNA(Leu) + L-leucine + ATP = L-leucyl-tRNA(Leu) + AMP + diphosphate. The sequence is that of Leucine--tRNA ligase from Mycobacterium avium (strain 104).